The chain runs to 434 residues: 4-hydroxyphenylpyruvate dioxygenase (434 aa).

The segment at 1 to 21 (MPPTPTTPAATGAAAAVTPEH) is disordered. Residues 7 to 19 (TPAATGAAAAVTP) are compositionally biased toward low complexity. VOC domains are found at residues 41–192 (SFHH…FLPG) and 208–368 (RFDH…IFTK). Positions 211, 293, and 379 each coordinate Fe cation.

Belongs to the 4HPPD family. The cofactor is Fe cation.

The protein localises to the cytoplasm. The enzyme catalyses 3-(4-hydroxyphenyl)pyruvate + O2 = homogentisate + CO2. Its pathway is amino-acid degradation; L-phenylalanine degradation; acetoacetate and fumarate from L-phenylalanine: step 3/6. The protein operates within cofactor biosynthesis; prenylquinone biosynthesis. The polypeptide is 4-hydroxyphenylpyruvate dioxygenase (Hordeum vulgare (Barley)).